Consider the following 360-residue polypeptide: Photosystem II protein D1 1 (360 aa).

Helical transmembrane passes span 29–46 (YVGWFGVLMIPTLLSATI), 118–133 (HFLIGVFCYLGREWEL), and 142–156 (WICIAYSAPVAAAAA). A chlorophyll a-binding site is contributed by His-118. Tyr-126 contacts pheophytin a. Residues Asp-170 and Glu-189 each coordinate [CaMn4O5] cluster. Residues 197-218 (FHMLGVAGVFGGSLFSAMHGSL) traverse the membrane as a helical segment. His-198 serves as a coordination point for chlorophyll a. A quinone-binding positions include His-215 and 264–265 (SF). His-215 is a binding site for Fe cation. Residue His-272 participates in Fe cation binding. The chain crosses the membrane as a helical span at residues 274–288 (FLAAWPVIGIWFTAL). 4 residues coordinate [CaMn4O5] cluster: His-332, Glu-333, Asp-342, and Ala-344. A propeptide spanning residues 345 to 360 (GTESAPVAVGNADLNG) is cleaved from the precursor.

Belongs to the reaction center PufL/M/PsbA/D family. In terms of assembly, PSII is composed of 1 copy each of membrane proteins PsbA, PsbB, PsbC, PsbD, PsbE, PsbF, PsbH, PsbI, PsbJ, PsbK, PsbL, PsbM, PsbT, PsbX, Psb30/Ycf12, peripheral proteins PsbO, CyanoQ (PsbQ), PsbU, PsbV and a large number of cofactors. It forms dimeric complexes. The D1/D2 heterodimer binds P680, chlorophylls that are the primary electron donor of PSII, and subsequent electron acceptors. It shares a non-heme iron and each subunit binds pheophytin, quinone, additional chlorophylls, carotenoids and lipids. D1 provides most of the ligands for the Mn4-Ca-O5 cluster of the oxygen-evolving complex (OEC). There is also a Cl(-1) ion associated with D1 and D2, which is required for oxygen evolution. The PSII complex binds additional chlorophylls, carotenoids and specific lipids. serves as cofactor. In terms of processing, tyr-161 forms a radical intermediate that is referred to as redox-active TyrZ, YZ or Y-Z. Post-translationally, C-terminally processed by CtpA; processing is essential to allow assembly of the oxygen-evolving complex and thus photosynthetic growth.

The protein resides in the cell inner membrane. The catalysed reaction is 2 a plastoquinone + 4 hnu + 2 H2O = 2 a plastoquinol + O2. Photosystem II (PSII) is a light-driven water:plastoquinone oxidoreductase that uses light energy to abstract electrons from H(2)O, generating O(2) and a proton gradient subsequently used for ATP formation. It consists of a core antenna complex that captures photons, and an electron transfer chain that converts photonic excitation into a charge separation. The D1/D2 (PsbA/PsbD) reaction center heterodimer binds P680, the primary electron donor of PSII as well as several subsequent electron acceptors. This chain is Photosystem II protein D1 1, found in Gloeobacter violaceus (strain ATCC 29082 / PCC 7421).